The following is a 705-amino-acid chain: Tetratricopeptide repeat protein 12 (705 aa).

Threonine 71 is modified (phosphothreonine). TPR repeat units lie at residues 106–139 (ADAL…LKDM), 140–173 (KVLY…DEKC), and 174–207 (TKAY…NPKL).

As to expression, expressed in testis and in epithelial cells of trachea and bronchial tube.

Its subcellular location is the cytoplasm. In terms of biological role, cytoplasmic protein that plays a role in the proper assembly of dynein arm complexes in motile cilia in both respiratory cells and sperm flagella. The chain is Tetratricopeptide repeat protein 12 (TTC12) from Homo sapiens (Human).